Here is a 328-residue protein sequence, read N- to C-terminus: tRNA uridine(34) hydroxylase (328 aa).

Residues 130 to 224 (LDEDTVVLDT…YGKDPEVQGE (95 aa)) enclose the Rhodanese domain. The active-site Cysteine persulfide intermediate is the Cys184.

It belongs to the TrhO family.

The catalysed reaction is uridine(34) in tRNA + AH2 + O2 = 5-hydroxyuridine(34) in tRNA + A + H2O. In terms of biological role, catalyzes oxygen-dependent 5-hydroxyuridine (ho5U) modification at position 34 in tRNAs. The chain is tRNA uridine(34) hydroxylase from Streptococcus pyogenes serotype M12 (strain MGAS2096).